The primary structure comprises 342 residues: Arrestin domain-containing protein 5 (342 aa).

Belongs to the arrestin family. Testis-enriched.

The protein resides in the membrane. Plays an essential role in spermatogenesis. May be involved in the anchoring of the sperm head to the tail during spermatogenesis by affecting SEC22A-mediated SUN5 and NDC1 transport and localization. This is Arrestin domain-containing protein 5 (ARRDC5) from Homo sapiens (Human).